We begin with the raw amino-acid sequence, 70 residues long: Conotoxin AbVIB (70 aa).

The first 17 residues, 1-17, serve as a signal peptide directing secretion; the sequence is VIIIAVLFLTACQLTTA. Residues 18–41 constitute a propeptide that is removed on maturation; it reads ETSSRGKQKHRALRSTDKNSKLTR. Residues 20 to 41 form a disordered region; that stretch reads SSRGKQKHRALRSTDKNSKLTR. 3 disulfide bridges follow: Cys43–Cys57, Cys50–Cys61, and Cys56–Cys68.

This sequence belongs to the conotoxin O1 superfamily. Expressed by the venom duct.

The protein localises to the secreted. The protein is Conotoxin AbVIB of Conus abbreviatus (Abbreviated cone).